A 231-amino-acid chain; its full sequence is CD302 antigen (231 aa).

The signal sequence occupies residues methionine 1 to alanine 21. At aspartate 22–histidine 169 the chain is on the extracellular side. A C-type lectin domain is found at phenylalanine 31–leucine 153. N-linked (GlcNAc...) asparagine glycosylation is present at asparagine 110. Residues cysteine 129 and cysteine 144 are joined by a disulfide bond. The chain crosses the membrane as a helical span at residues isoleucine 170 to valine 190. Residues tryptophan 191–alanine 231 lie on the Cytoplasmic side of the membrane.

It is found in the membrane. The protein localises to the cell projection. Its subcellular location is the filopodium. The protein resides in the cytoplasm. It localises to the cell cortex. It is found in the microvillus. In terms of biological role, potential multifunctional C-type lectin receptor that may play roles in endocytosis and phagocytosis as well as in cell adhesion and migration. This Trichosurus vulpecula (Brush-tailed possum) protein is CD302 antigen.